A 261-amino-acid chain; its full sequence is MSYTARAAKHPSPVAQRLLRLMDTKKTNLCASVDVKTTAEFLSLIDKLGPYICLVKTHIDIIDDFSFDGTIKPLLELAKKHNFMIFEDRKFADIGNTVKSQYSGGVYKIAQWSDITNAHGITGAGIVNGLKEAAQETTSEPRGLLMLAELSSKGSLAYGEYTEKTVEIAKSDKEFVVGFIAQRDMGGRDEGFDWLIMTPGVGLDDKGDALGQQYRTVNEVISTGTDIIIVGRGLFGKGRDPEVEGKRYRDAGWKAYQKRLQ.

Substrate-binding positions include Asp34, 56–58 (KTH), 88–97 (DRKFADIGNT), Tyr214, and Arg232. The Proton donor role is filled by Lys90.

Belongs to the OMP decarboxylase family.

It catalyses the reaction orotidine 5'-phosphate + H(+) = UMP + CO2. It participates in pyrimidine metabolism; UMP biosynthesis via de novo pathway; UMP from orotate: step 2/2. The protein is Orotidine 5'-phosphate decarboxylase (URA3) of Kodamaea ohmeri (Yeast).